Here is a 304-residue protein sequence, read N- to C-terminus: D-tagatose-1-phosphate kinase (304 aa).

Asp250 functions as the Proton acceptor in the catalytic mechanism.

Belongs to the carbohydrate kinase PfkB family. Requires Mg(2+) as cofactor.

The enzyme catalyses alpha-D-tagatopyranose 1-phosphate + ATP = D-tagatofuranose 1,6-bisphosphate + ADP + H(+). The protein operates within carbohydrate degradation. Functionally, kinase involved in a D-tagatose catabolic pathway. Catalyzes the phosphorylation of D-tagatose-1-phosphate (Tag-1P) to D-tagatose-1,6-bisphosphate. This chain is D-tagatose-1-phosphate kinase, found in Klebsiella oxytoca.